The sequence spans 62 residues: MAKTIVVKQIGSPIRRPAIQRETLKGLGLNKMNRTRELEDTPAVRGMVAKIPHLAVIIEERG.

This sequence belongs to the universal ribosomal protein uL30 family. As to quaternary structure, part of the 50S ribosomal subunit.

In Paracoccus denitrificans (strain Pd 1222), this protein is Large ribosomal subunit protein uL30.